We begin with the raw amino-acid sequence, 206 residues long: Large ribosomal subunit protein uL4 (206 aa).

The interval 45–75 is disordered; the sequence is RQGTHSTKTRGEVRGGGRKPWRQKGTGRARQ. The segment covering 60 to 71 has biased composition (basic residues); the sequence is GGRKPWRQKGTG.

It belongs to the universal ribosomal protein uL4 family. In terms of assembly, part of the 50S ribosomal subunit.

Functionally, one of the primary rRNA binding proteins, this protein initially binds near the 5'-end of the 23S rRNA. It is important during the early stages of 50S assembly. It makes multiple contacts with different domains of the 23S rRNA in the assembled 50S subunit and ribosome. Forms part of the polypeptide exit tunnel. In Thermoanaerobacter pseudethanolicus (strain ATCC 33223 / 39E) (Clostridium thermohydrosulfuricum), this protein is Large ribosomal subunit protein uL4.